We begin with the raw amino-acid sequence, 360 residues long: UDP-N-acetylglucosamine--N-acetylmuramyl-(pentapeptide) pyrophosphoryl-undecaprenol N-acetylglucosamine transferase (360 aa).

Residues 15–17 (TGG), Asn124, Arg165, Ser191, and Gln285 each bind UDP-N-acetyl-alpha-D-glucosamine.

The protein belongs to the glycosyltransferase 28 family. MurG subfamily.

It localises to the cell inner membrane. It carries out the reaction di-trans,octa-cis-undecaprenyl diphospho-N-acetyl-alpha-D-muramoyl-L-alanyl-D-glutamyl-meso-2,6-diaminopimeloyl-D-alanyl-D-alanine + UDP-N-acetyl-alpha-D-glucosamine = di-trans,octa-cis-undecaprenyl diphospho-[N-acetyl-alpha-D-glucosaminyl-(1-&gt;4)]-N-acetyl-alpha-D-muramoyl-L-alanyl-D-glutamyl-meso-2,6-diaminopimeloyl-D-alanyl-D-alanine + UDP + H(+). It participates in cell wall biogenesis; peptidoglycan biosynthesis. In terms of biological role, cell wall formation. Catalyzes the transfer of a GlcNAc subunit on undecaprenyl-pyrophosphoryl-MurNAc-pentapeptide (lipid intermediate I) to form undecaprenyl-pyrophosphoryl-MurNAc-(pentapeptide)GlcNAc (lipid intermediate II). This chain is UDP-N-acetylglucosamine--N-acetylmuramyl-(pentapeptide) pyrophosphoryl-undecaprenol N-acetylglucosamine transferase, found in Gloeothece citriformis (strain PCC 7424) (Cyanothece sp. (strain PCC 7424)).